A 129-amino-acid chain; its full sequence is MPKSIIVPAGTHKPIAPFSPGTLADGIVYVSGTLPFDKNNDVVHVGDAGAQTRHVLETIKSVIETAGGTMEDVTMNHIFVTDWANYQAVNAVYAEYFPGDKPARYCILCGLVKPDALVEIATVAHIGKK.

The protein belongs to the RutC family.

It carries out the reaction (Z)-3-aminoacrylate + H2O + H(+) = 3-oxopropanoate + NH4(+). Functionally, involved in pyrimidine catabolism. Catalyzes the deamination of 3-aminoacrylate to malonic semialdehyde, a reaction that can also occur spontaneously. RutC may facilitate the reaction and modulate the metabolic fitness, rather than catalyzing essential functions. This chain is 3-aminoacrylate deaminase RutC, found in Rhizobium rhizogenes (strain K84 / ATCC BAA-868) (Agrobacterium radiobacter).